A 105-amino-acid polypeptide reads, in one-letter code: UPF0145 protein Mevan_1624 (105 aa).

Belongs to the UPF0145 family.

This Methanococcus vannielii (strain ATCC 35089 / DSM 1224 / JCM 13029 / OCM 148 / SB) protein is UPF0145 protein Mevan_1624.